The primary structure comprises 369 residues: Flagellar P-ring protein (369 aa).

Positions 1–22 (MTKFKHLLALAALLLAAGAAQA) are cleaved as a signal peptide.

Belongs to the FlgI family. In terms of assembly, the basal body constitutes a major portion of the flagellar organelle and consists of four rings (L,P,S, and M) mounted on a central rod.

It is found in the periplasm. The protein resides in the bacterial flagellum basal body. Assembles around the rod to form the L-ring and probably protects the motor/basal body from shearing forces during rotation. This is Flagellar P-ring protein from Pseudomonas aeruginosa (strain LESB58).